The chain runs to 232 residues: Large ribosomal subunit protein uL1 (232 aa).

This sequence belongs to the universal ribosomal protein uL1 family. In terms of assembly, part of the 50S ribosomal subunit.

Functionally, binds directly to 23S rRNA. The L1 stalk is quite mobile in the ribosome, and is involved in E site tRNA release. Protein L1 is also a translational repressor protein, it controls the translation of the L11 operon by binding to its mRNA. The chain is Large ribosomal subunit protein uL1 from Phocaeicola vulgatus (strain ATCC 8482 / DSM 1447 / JCM 5826 / CCUG 4940 / NBRC 14291 / NCTC 11154) (Bacteroides vulgatus).